The sequence spans 73 residues: Toxin Td10 (73 aa).

The signal sequence occupies residues 1–7 (IGMVVEC). The LCN-type CS-alpha/beta domain maps to 8 to 70 (KDGYLMGPDG…VWERATNRCG (63 aa)). 4 disulfides stabilise this stretch: Cys-18–Cys-69, Cys-22–Cys-44, Cys-30–Cys-50, and Cys-34–Cys-52. Residue Lys-71 is modified to Lysine amide.

The protein belongs to the long (4 C-C) scorpion toxin superfamily. Sodium channel inhibitor family. Beta subfamily. In terms of tissue distribution, expressed by the venom gland.

It localises to the secreted. Beta toxins bind voltage-independently at site-4 of sodium channels (Nav) and shift the voltage of activation toward more negative potentials thereby affecting sodium channel activation and promoting spontaneous and repetitive firing. This chain is Toxin Td10, found in Tityus discrepans (Venezuelan scorpion).